The primary structure comprises 373 residues: MKQTLLSLSNLTKQFDGKKVLDSLDLDIFDGEFITLLGPSGCGKTTLLRMMAGFEHPDDGTIALGDQDLTHTPPEHRPLNTVFQNYALFPHMSVFDNVAYGLKMEKRPKQEIRERVEDALAMVQLEDFARRKPHQLSGGQQQRVAIARAVVKRPKVLLLDEPLSALDYKLRRTMQVELKRLQRELGITFVFVTHDQEEALSMSDRVVVLKDGLIQQLGTPREVYERPANLFTARFVGETNFFPGRVDKANGDDTITVDVFGLKRTFRKPDFPVSGGQSLHVLLRPEDIRVLAPDDEDGVAGKIVERNYKGSTLDSVIHLEDGTEVLASEFFDEDDPTFDYRLGEPVKVSWVDGWEWLLPTEPEALPEEEGTDA.

The ABC transporter domain occupies 6-236; it reads LSLSNLTKQF…PANLFTARFV (231 aa). 38–45 serves as a coordination point for ATP; that stretch reads GPSGCGKT.

The protein belongs to the ABC transporter superfamily. Spermidine/putrescine importer (TC 3.A.1.11.1) family. The complex is composed of two ATP-binding proteins (PotA), two transmembrane proteins (PotB and PotC) and a solute-binding protein (PotD).

It localises to the cell inner membrane. The catalysed reaction is ATP + H2O + polyamine-[polyamine-binding protein]Side 1 = ADP + phosphate + polyamineSide 2 + [polyamine-binding protein]Side 1.. Functionally, part of the ABC transporter complex PotABCD involved in spermidine/putrescine import. Responsible for energy coupling to the transport system. The chain is Spermidine/putrescine import ATP-binding protein PotA from Marinobacter nauticus (strain ATCC 700491 / DSM 11845 / VT8) (Marinobacter aquaeolei).